A 293-amino-acid polypeptide reads, in one-letter code: Ethanolamine ammonia-lyase small subunit (293 aa).

Adenosylcob(III)alamin contacts are provided by Val-207 and Glu-228.

Belongs to the EutC family. As to quaternary structure, the basic unit is a heterodimer which dimerizes to form tetramers. The heterotetramers trimerize; 6 large subunits form a core ring with 6 small subunits projecting outwards. Adenosylcob(III)alamin is required as a cofactor.

Its subcellular location is the bacterial microcompartment. It carries out the reaction ethanolamine = acetaldehyde + NH4(+). It functions in the pathway amine and polyamine degradation; ethanolamine degradation. Its function is as follows. Catalyzes the deamination of various vicinal amino-alcohols to oxo compounds. Allows this organism to utilize ethanolamine as the sole source of nitrogen and carbon in the presence of external vitamin B12. The protein is Ethanolamine ammonia-lyase small subunit of Listeria monocytogenes serotype 4a (strain HCC23).